We begin with the raw amino-acid sequence, 393 residues long: Elongation factor Tu (393 aa).

Residues 10-203 (KPHVNIGTIG…AVDDYIPEPV (194 aa)) enclose the tr-type G domain. Residues 19–26 (GHVDHGKT) form a G1 region. Position 19-26 (19-26 (GHVDHGKT)) interacts with GTP. Thr-26 contacts Mg(2+). The interval 60–64 (GITIS) is G2. Residues 81-84 (DCPG) form a G3 region. GTP-binding positions include 81 to 85 (DCPGH) and 136 to 139 (NKVD). Positions 136–139 (NKVD) are G4. The tract at residues 173-175 (SAL) is G5.

It belongs to the TRAFAC class translation factor GTPase superfamily. Classic translation factor GTPase family. EF-Tu/EF-1A subfamily. In terms of assembly, monomer.

The protein resides in the cytoplasm. The catalysed reaction is GTP + H2O = GDP + phosphate + H(+). In terms of biological role, GTP hydrolase that promotes the GTP-dependent binding of aminoacyl-tRNA to the A-site of ribosomes during protein biosynthesis. The polypeptide is Elongation factor Tu (Chlorobaculum parvum (strain DSM 263 / NCIMB 8327) (Chlorobium vibrioforme subsp. thiosulfatophilum)).